The sequence spans 36 residues: Photosystem I reaction center subunit VIII (36 aa).

The helical transmembrane segment at 9-29 (ILVPLVGLVFPAVTMASLFLY) threads the bilayer.

The protein belongs to the PsaI family.

The protein resides in the plastid. It is found in the chloroplast thylakoid membrane. May help in the organization of the PsaL subunit. This Staurastrum punctulatum (Green alga) protein is Photosystem I reaction center subunit VIII.